A 486-amino-acid polypeptide reads, in one-letter code: Malonate-semialdehyde dehydrogenase (486 aa).

5 residues coordinate NAD(+): Phe-154, Lys-178, Glu-181, Arg-182, and Ser-231. Cys-286 acts as the Nucleophile in catalysis. Glu-386 serves as a coordination point for NAD(+).

The protein belongs to the aldehyde dehydrogenase family. IolA subfamily. Homotetramer.

The enzyme catalyses 3-oxopropanoate + NAD(+) + CoA + H2O = hydrogencarbonate + acetyl-CoA + NADH + H(+). It catalyses the reaction 2-methyl-3-oxopropanoate + NAD(+) + CoA + H2O = propanoyl-CoA + hydrogencarbonate + NADH + H(+). Its pathway is polyol metabolism; myo-inositol degradation into acetyl-CoA; acetyl-CoA from myo-inositol: step 7/7. Functionally, catalyzes the oxidation of malonate semialdehyde (MSA) and methylmalonate semialdehyde (MMSA) into acetyl-CoA and propanoyl-CoA, respectively. Is involved in a myo-inositol catabolic pathway. Bicarbonate, and not CO2, is the end-product of the enzymatic reaction. The chain is Malonate-semialdehyde dehydrogenase from Bacillus cereus (strain G9842).